Here is a 672-residue protein sequence, read N- to C-terminus: DNA ligase (672 aa).

Residues 32 to 36, 81 to 82, and Glu114 each bind NAD(+); these read DSEYD and SL. Lys116 functions as the N6-AMP-lysine intermediate in the catalytic mechanism. NAD(+) is bound by residues Arg137, Glu174, Lys291, and Lys315. Zn(2+)-binding residues include Cys409, Cys412, Cys427, and Cys433. The BRCT domain maps to 592 to 672; the sequence is VNENPFKEKT…EFLEIVNSFS (81 aa).

It belongs to the NAD-dependent DNA ligase family. LigA subfamily. It depends on Mg(2+) as a cofactor. Requires Mn(2+) as cofactor.

It catalyses the reaction NAD(+) + (deoxyribonucleotide)n-3'-hydroxyl + 5'-phospho-(deoxyribonucleotide)m = (deoxyribonucleotide)n+m + AMP + beta-nicotinamide D-nucleotide.. Functionally, DNA ligase that catalyzes the formation of phosphodiester linkages between 5'-phosphoryl and 3'-hydroxyl groups in double-stranded DNA using NAD as a coenzyme and as the energy source for the reaction. It is essential for DNA replication and repair of damaged DNA. The sequence is that of DNA ligase from Actinobacillus succinogenes (strain ATCC 55618 / DSM 22257 / CCUG 43843 / 130Z).